The following is a 493-amino-acid chain: (+)-menthofuran synthase (493 aa).

Position 1 (Met-1) is a topological domain, cytoplasmic. Residues Ala-2–Phe-19 form a helical; Signal-anchor for type II membrane protein membrane-spanning segment. At His-20–Ser-493 the chain is on the lumenal side. The N-linked (GlcNAc...) asparagine glycan is linked to Asn-169. Cys-434 is a binding site for heme.

It belongs to the cytochrome P450 family. Requires heme as cofactor.

Its subcellular location is the membrane. The enzyme catalyses (R)-pulegone + reduced [NADPH--hemoprotein reductase] + O2 = (R)-menthofuran + oxidized [NADPH--hemoprotein reductase] + 2 H2O + H(+). It participates in secondary metabolite biosynthesis; terpenoid biosynthesis. Monoterpene synthase that catalyzes the formation of (+)-menthofuran from (+)-pulegone. The polypeptide is (+)-menthofuran synthase (Mentha piperita (Peppermint)).